Here is a 156-residue protein sequence, read N- to C-terminus: C-type lectin lectoxin-Lei1 (156 aa).

A signal peptide spans 1–23 (MRRFLFLSLGVLVVAFSLNGIGA). Cystine bridges form between cysteine 27–cysteine 38, cysteine 55–cysteine 154, and cysteine 129–cysteine 146. Residues 34-155 (FDRFCYKVIK…CESRNIFICK (122 aa)) enclose the C-type lectin domain. 2 N-linked (GlcNAc...) asparagine glycosylation sites follow: asparagine 60 and asparagine 99. Residues 119 to 121 (KRN) carry the Sugar-binding motif. Asparagine 142 is a Ca(2+) binding site.

The protein belongs to the true venom lectin family. In terms of tissue distribution, expressed by the venom gland.

The protein localises to the secreted. In terms of biological role, lectin which recognizes specific carbohydrate structures and agglutinates a variety of animal cells by binding to cell-surface glycoproteins and glycolipids. May be a calcium-dependent lectin. The polypeptide is C-type lectin lectoxin-Lei1 (Leioheterodon madagascariensis (Malagasy giant hognose snake)).